The following is a 513-amino-acid chain: ATP synthase subunit alpha (513 aa).

Residue G169–T176 coordinates ATP.

It belongs to the ATPase alpha/beta chains family. F-type ATPases have 2 components, CF(1) - the catalytic core - and CF(0) - the membrane proton channel. CF(1) has five subunits: alpha(3), beta(3), gamma(1), delta(1), epsilon(1). CF(0) has three main subunits: a(1), b(2) and c(9-12). The alpha and beta chains form an alternating ring which encloses part of the gamma chain. CF(1) is attached to CF(0) by a central stalk formed by the gamma and epsilon chains, while a peripheral stalk is formed by the delta and b chains.

Its subcellular location is the cell inner membrane. The catalysed reaction is ATP + H2O + 4 H(+)(in) = ADP + phosphate + 5 H(+)(out). Produces ATP from ADP in the presence of a proton gradient across the membrane. The alpha chain is a regulatory subunit. This is ATP synthase subunit alpha from Histophilus somni (strain 2336) (Haemophilus somnus).